The primary structure comprises 471 residues: UDP-N-acetylmuramate--L-alanine ligase (471 aa).

Position 112 to 118 (112 to 118 (GTHGKTT)) interacts with ATP.

The protein belongs to the MurCDEF family.

Its subcellular location is the cytoplasm. It catalyses the reaction UDP-N-acetyl-alpha-D-muramate + L-alanine + ATP = UDP-N-acetyl-alpha-D-muramoyl-L-alanine + ADP + phosphate + H(+). It functions in the pathway cell wall biogenesis; peptidoglycan biosynthesis. Functionally, cell wall formation. The protein is UDP-N-acetylmuramate--L-alanine ligase of Aromatoleum aromaticum (strain DSM 19018 / LMG 30748 / EbN1) (Azoarcus sp. (strain EbN1)).